Consider the following 424-residue polypeptide: Tyrosine--tRNA ligase (424 aa).

An L-tyrosine-binding site is contributed by Tyr37. The short motif at Pro42–His51 is the 'HIGH' region element. The L-tyrosine site is built by Tyr175 and Gln179. Positions Lys235–Thr239 match the 'KMSKS' region motif. Lys238 lines the ATP pocket. Residues Ala357–Gly414 form the S4 RNA-binding domain.

It belongs to the class-I aminoacyl-tRNA synthetase family. TyrS type 1 subfamily. In terms of assembly, homodimer.

It is found in the cytoplasm. The catalysed reaction is tRNA(Tyr) + L-tyrosine + ATP = L-tyrosyl-tRNA(Tyr) + AMP + diphosphate + H(+). Catalyzes the attachment of tyrosine to tRNA(Tyr) in a two-step reaction: tyrosine is first activated by ATP to form Tyr-AMP and then transferred to the acceptor end of tRNA(Tyr). This Yersinia pseudotuberculosis serotype O:1b (strain IP 31758) protein is Tyrosine--tRNA ligase.